Consider the following 572-residue polypeptide: Proline--tRNA ligase (572 aa).

It belongs to the class-II aminoacyl-tRNA synthetase family. ProS type 1 subfamily. In terms of assembly, homodimer.

Its subcellular location is the cytoplasm. It carries out the reaction tRNA(Pro) + L-proline + ATP = L-prolyl-tRNA(Pro) + AMP + diphosphate. Its function is as follows. Catalyzes the attachment of proline to tRNA(Pro) in a two-step reaction: proline is first activated by ATP to form Pro-AMP and then transferred to the acceptor end of tRNA(Pro). As ProRS can inadvertently accommodate and process non-cognate amino acids such as alanine and cysteine, to avoid such errors it has two additional distinct editing activities against alanine. One activity is designated as 'pretransfer' editing and involves the tRNA(Pro)-independent hydrolysis of activated Ala-AMP. The other activity is designated 'posttransfer' editing and involves deacylation of mischarged Ala-tRNA(Pro). The misacylated Cys-tRNA(Pro) is not edited by ProRS. This is Proline--tRNA ligase from Haemophilus influenzae (strain PittEE).